Reading from the N-terminus, the 557-residue chain is Formate--tetrahydrofolate ligase (557 aa).

An ATP-binding site is contributed by 67–74 (TPAGEGKT).

Belongs to the formate--tetrahydrofolate ligase family.

It catalyses the reaction (6S)-5,6,7,8-tetrahydrofolate + formate + ATP = (6R)-10-formyltetrahydrofolate + ADP + phosphate. Its pathway is one-carbon metabolism; tetrahydrofolate interconversion. The protein is Formate--tetrahydrofolate ligase of Cereibacter sphaeroides (strain ATCC 17025 / ATH 2.4.3) (Rhodobacter sphaeroides).